The following is a 144-amino-acid chain: MNSEKVFVDGNVIVDIFDERRVNHKYSVQAIRILLANKFDLLTSSDLITTVYYVLSKIDKKKALSDIKEVVNILEIIPFGKAEVEKAIELMEGDKNFKDLEDTLQYVLAKKEGCKLILSNDKSFYSPDIEVLTTEEFCERWNTL.

The PINc domain maps to 6-132 (VFVDGNVIVD…SFYSPDIEVL (127 aa)). Mg(2+) is bound by residues D9 and D102.

It belongs to the PINc/VapC protein family. It depends on Mg(2+) as a cofactor.

In terms of biological role, toxic component of a type II toxin-antitoxin (TA) system. An RNase. This chain is Ribonuclease VapC1, found in Aquifex aeolicus (strain VF5).